A 152-amino-acid chain; its full sequence is Ribosome maturation factor RimP (152 aa).

This sequence belongs to the RimP family.

It localises to the cytoplasm. Functionally, required for maturation of 30S ribosomal subunits. In Burkholderia ambifaria (strain MC40-6), this protein is Ribosome maturation factor RimP.